The chain runs to 247 residues: Uridylate kinase (247 aa).

ATP is bound at residue 21–24 (KVSG). A UMP-binding site is contributed by Gly-63. Residues Gly-64 and Arg-68 each contribute to the ATP site. UMP-binding positions include Asp-83 and 144–151 (TGNPFCTT). Residues Thr-171, Gln-172, Tyr-177, and Asp-180 each coordinate ATP.

Belongs to the UMP kinase family. In terms of assembly, homohexamer.

It is found in the cytoplasm. The catalysed reaction is UMP + ATP = UDP + ADP. It functions in the pathway pyrimidine metabolism; CTP biosynthesis via de novo pathway; UDP from UMP (UMPK route): step 1/1. Inhibited by UTP. Functionally, catalyzes the reversible phosphorylation of UMP to UDP. The chain is Uridylate kinase from Rickettsia rickettsii (strain Sheila Smith).